An 89-amino-acid polypeptide reads, in one-letter code: Small ribosomal subunit protein uS15 (89 aa).

The protein belongs to the universal ribosomal protein uS15 family. Part of the 30S ribosomal subunit. Forms a bridge to the 50S subunit in the 70S ribosome, contacting the 23S rRNA.

Functionally, one of the primary rRNA binding proteins, it binds directly to 16S rRNA where it helps nucleate assembly of the platform of the 30S subunit by binding and bridging several RNA helices of the 16S rRNA. Its function is as follows. Forms an intersubunit bridge (bridge B4) with the 23S rRNA of the 50S subunit in the ribosome. The protein is Small ribosomal subunit protein uS15 of Ralstonia nicotianae (strain ATCC BAA-1114 / GMI1000) (Ralstonia solanacearum).